Reading from the N-terminus, the 269-residue chain is 4-hydroxy-tetrahydrodipicolinate reductase (269 aa).

NAD(+)-binding positions include 12 to 17 (GGSGRM), 102 to 104 (GTT), and 126 to 129 (SPNM). Catalysis depends on histidine 159, which acts as the Proton donor/acceptor. Histidine 160 provides a ligand contact to (S)-2,3,4,5-tetrahydrodipicolinate. Lysine 163 acts as the Proton donor in catalysis. 169-170 (GT) contributes to the (S)-2,3,4,5-tetrahydrodipicolinate binding site.

This sequence belongs to the DapB family.

It localises to the cytoplasm. It carries out the reaction (S)-2,3,4,5-tetrahydrodipicolinate + NAD(+) + H2O = (2S,4S)-4-hydroxy-2,3,4,5-tetrahydrodipicolinate + NADH + H(+). The catalysed reaction is (S)-2,3,4,5-tetrahydrodipicolinate + NADP(+) + H2O = (2S,4S)-4-hydroxy-2,3,4,5-tetrahydrodipicolinate + NADPH + H(+). It participates in amino-acid biosynthesis; L-lysine biosynthesis via DAP pathway; (S)-tetrahydrodipicolinate from L-aspartate: step 4/4. Its function is as follows. Catalyzes the conversion of 4-hydroxy-tetrahydrodipicolinate (HTPA) to tetrahydrodipicolinate. The sequence is that of 4-hydroxy-tetrahydrodipicolinate reductase from Leptospira borgpetersenii serovar Hardjo-bovis (strain JB197).